The sequence spans 275 residues: NH(3)-dependent NAD(+) synthetase (275 aa).

46–53 provides a ligand contact to ATP; it reads GISGGQDS. Asp-52 is a binding site for Mg(2+). Deamido-NAD(+) is bound at residue Arg-140. ATP is bound at residue Thr-160. Glu-165 is a Mg(2+) binding site. 2 residues coordinate deamido-NAD(+): Lys-173 and Asp-180. ATP-binding residues include Lys-189 and Thr-211. 260 to 261 contacts deamido-NAD(+); sequence HK.

It belongs to the NAD synthetase family. In terms of assembly, homodimer.

It carries out the reaction deamido-NAD(+) + NH4(+) + ATP = AMP + diphosphate + NAD(+) + H(+). It functions in the pathway cofactor biosynthesis; NAD(+) biosynthesis; NAD(+) from deamido-NAD(+) (ammonia route): step 1/1. Catalyzes the ATP-dependent amidation of deamido-NAD to form NAD. Uses ammonia as a nitrogen source. The sequence is that of NH(3)-dependent NAD(+) synthetase from Shigella dysenteriae serotype 1 (strain Sd197).